A 311-amino-acid polypeptide reads, in one-letter code: MPLRLIFMGTPDFAVPTLLELAGHGHEIAAVYTRAPKPGGRRGLALVPTPIETEARRLGIPVVTPKTLKTEEALTAFRAHQADAAVVVAYGMILPQAILDAPKLGCYNLHASLLPRWRGAAPINRAIMAGDAETGVMVMKMDVGLDTGDVAMAERLPITDAMTASDLHDQLARIGADLMVRAMAALERGGLTLTKQADAGVTYAAKIEKAEARIDWSKPANAVLRHIHGLSPFPGAWSEVTLDGEAVRLKILRCALADGRGEPGAVINEQLTIACADGAVRVTELQRAGKGPMKAADFLRGTRVAPGLRFG.

A (6S)-5,6,7,8-tetrahydrofolate-binding site is contributed by 112–115 (SLLP).

It belongs to the Fmt family.

It catalyses the reaction L-methionyl-tRNA(fMet) + (6R)-10-formyltetrahydrofolate = N-formyl-L-methionyl-tRNA(fMet) + (6S)-5,6,7,8-tetrahydrofolate + H(+). In terms of biological role, attaches a formyl group to the free amino group of methionyl-tRNA(fMet). The formyl group appears to play a dual role in the initiator identity of N-formylmethionyl-tRNA by promoting its recognition by IF2 and preventing the misappropriation of this tRNA by the elongation apparatus. In Bradyrhizobium sp. (strain BTAi1 / ATCC BAA-1182), this protein is Methionyl-tRNA formyltransferase.